The chain runs to 417 residues: Serine hydroxymethyltransferase (417 aa).

Residues Leu112 and 116–118 contribute to the (6S)-5,6,7,8-tetrahydrofolate site; that span reads GHL. An N6-(pyridoxal phosphate)lysine modification is found at Lys221. Position 247 (Glu247) interacts with (6S)-5,6,7,8-tetrahydrofolate.

Belongs to the SHMT family. Homodimer. The cofactor is pyridoxal 5'-phosphate.

The protein localises to the cytoplasm. The enzyme catalyses (6R)-5,10-methylene-5,6,7,8-tetrahydrofolate + glycine + H2O = (6S)-5,6,7,8-tetrahydrofolate + L-serine. The protein operates within one-carbon metabolism; tetrahydrofolate interconversion. It participates in amino-acid biosynthesis; glycine biosynthesis; glycine from L-serine: step 1/1. Functionally, catalyzes the reversible interconversion of serine and glycine with tetrahydrofolate (THF) serving as the one-carbon carrier. This reaction serves as the major source of one-carbon groups required for the biosynthesis of purines, thymidylate, methionine, and other important biomolecules. Also exhibits THF-independent aldolase activity toward beta-hydroxyamino acids, producing glycine and aldehydes, via a retro-aldol mechanism. This chain is Serine hydroxymethyltransferase, found in Borrelia recurrentis (strain A1).